The following is a 713-amino-acid chain: Probable tRNA (uracil-O(2)-)-methyltransferase (713 aa).

2 disordered regions span residues 49–92 and 480–508; these read TLRS…REGT and LHSR…HDAG. Serine 76 carries the post-translational modification Phosphoserine. A compositionally biased stretch (basic and acidic residues) spans 79 to 89; the sequence is GEPESGPRASR. The residue at position 489 (serine 489) is a Phosphoserine. Residues 669-698 form a C3H1-type zinc finger; it reads FKTRICWFFAHHPDGCVLPAAQCPFAHGPE.

This sequence belongs to the TRM44 family.

It localises to the cytoplasm. The catalysed reaction is uridine(44) in tRNA(Ser) + S-adenosyl-L-methionine = 2'-O-methyluridine(44) in tRNA(Ser) + S-adenosyl-L-homocysteine + H(+). In terms of biological role, probable adenosyl-L-methionine (AdoMet)-dependent tRNA (uracil-O(2)-)-methyltransferase. The sequence is that of Probable tRNA (uracil-O(2)-)-methyltransferase (Trmt44) from Mus musculus (Mouse).